Reading from the N-terminus, the 130-residue chain is uncharacterized protein (130 aa).

The first 26 residues, 1-26, serve as a signal peptide directing secretion; sequence MINNFKGILIIILSFLFLLLFKYSNA. N-linked (GlcNAc...) asparagine glycosylation is present at N58.

The protein belongs to the Dictyostelium gerABC family.

It is found in the secreted. This is an uncharacterized protein from Dictyostelium discoideum (Social amoeba).